A 337-amino-acid polypeptide reads, in one-letter code: Inositol 2-dehydrogenase (337 aa).

It belongs to the Gfo/Idh/MocA family. In terms of assembly, homotetramer.

It catalyses the reaction myo-inositol + NAD(+) = scyllo-inosose + NADH + H(+). In terms of biological role, involved in the oxidation of myo-inositol (MI) to 2-keto-myo-inositol (2KMI or 2-inosose). The sequence is that of Inositol 2-dehydrogenase from Corynebacterium glutamicum (strain ATCC 13032 / DSM 20300 / JCM 1318 / BCRC 11384 / CCUG 27702 / LMG 3730 / NBRC 12168 / NCIMB 10025 / NRRL B-2784 / 534).